The sequence spans 298 residues: Glutamyl-Q tRNA(Asp) synthetase (298 aa).

L-glutamate is bound by residues 8–12 (RFAPS) and Glu44. The short motif at 11–21 (PSPTGPLHFGS) is the 'HIGH' region element. Zn(2+)-binding residues include Cys100, Cys102, Tyr123, and Cys127. L-glutamate is bound by residues Tyr183 and Arg201. The 'KMSKS' region signature appears at 239–243 (KLSKQ). Lys242 contacts ATP.

It belongs to the class-I aminoacyl-tRNA synthetase family. GluQ subfamily. Requires Zn(2+) as cofactor.

In terms of biological role, catalyzes the tRNA-independent activation of glutamate in presence of ATP and the subsequent transfer of glutamate onto a tRNA(Asp). Glutamate is transferred on the 2-amino-5-(4,5-dihydroxy-2-cyclopenten-1-yl) moiety of the queuosine in the wobble position of the QUC anticodon. The sequence is that of Glutamyl-Q tRNA(Asp) synthetase from Burkholderia orbicola (strain MC0-3).